The chain runs to 102 residues: MQNQKIRIRLKAFDYRLIDQSAAEIVDTAKRTGAIVKGPVPLPTRIQRFDILRSPHVNKTSRDQFEIRTHQRLMDIVDPTDKTVDALMKLDLPAGVDVEIKV.

This sequence belongs to the universal ribosomal protein uS10 family. As to quaternary structure, part of the 30S ribosomal subunit.

Its function is as follows. Involved in the binding of tRNA to the ribosomes. In Cupriavidus metallidurans (strain ATCC 43123 / DSM 2839 / NBRC 102507 / CH34) (Ralstonia metallidurans), this protein is Small ribosomal subunit protein uS10.